Reading from the N-terminus, the 291-residue chain is Homoserine kinase (291 aa).

80–90 (RPASGLGSSAA) is a binding site for ATP.

The protein belongs to the GHMP kinase family. Homoserine kinase subfamily.

The protein localises to the cytoplasm. It catalyses the reaction L-homoserine + ATP = O-phospho-L-homoserine + ADP + H(+). It functions in the pathway amino-acid biosynthesis; L-threonine biosynthesis; L-threonine from L-aspartate: step 4/5. Its function is as follows. Catalyzes the ATP-dependent phosphorylation of L-homoserine to L-homoserine phosphate. This chain is Homoserine kinase, found in Natronomonas pharaonis (strain ATCC 35678 / DSM 2160 / CIP 103997 / JCM 8858 / NBRC 14720 / NCIMB 2260 / Gabara) (Halobacterium pharaonis).